The chain runs to 404 residues: MKIVSAEVFVTCPGRNFVTLKITTDSGLTGLGDATLNGRELPVASYLNDHVCPQLIGRDAHQIEDIWQYFYKGAYWRRGPVTMSAISAVDMALWDIKAKAANMPLYQLLGGASRTGVMVYCHTTGHSIDEVLDDYAKHRDQGFKAIRVQCGVPGMETTYGMAKGKGLAYEPATKGSLPEEQLWSTEKYLDFTPKLFEAVRDKFGFNEHLLHDMHHRLTPIEAARFGKSVEDYRLFWMEDPTPAENQACFRLIRQHTVTPIAVGEVFNSIWDCKQLIEEQLIDYIRTTITHAGGITGMRRIADFASLYQVRTGSHGPSDLSPICMAAALHFDLWVPNFGVQEYMGYSEQMLEVFPHSWTFDNGYMHPGEKPGLGIEFDEKLAAKYPYDPAYLPVARLEDGTLWNW.

Substrate contacts are provided by asparagine 37 and histidine 122. Tyrosine 159 (proton donor/acceptor) is an active-site residue. Aspartate 212 contacts Mg(2+). The Proton donor/acceptor role is filled by histidine 214. 2 residues coordinate Mg(2+): glutamate 238 and glutamate 264. Glutamate 264, arginine 285, histidine 314, aspartate 318, and glutamate 341 together coordinate substrate.

Belongs to the mandelate racemase/muconate lactonizing enzyme family. GalD subfamily. It depends on Mg(2+) as a cofactor.

The enzyme catalyses D-mannonate = 2-dehydro-3-deoxy-D-gluconate + H2O. Its function is as follows. Has low D-mannonate dehydratase activity (in vitro), suggesting that this is not a physiological substrate and that it has no significant role in D-mannonate degradation in vivo. Has no detectable activity with a panel of 70 other acid sugars (in vitro). This is D-galactonate dehydratase family member PC1_0802 from Pectobacterium carotovorum subsp. carotovorum (strain PC1).